Here is a 127-residue protein sequence, read N- to C-terminus: Small ribosomal subunit protein uS11 (127 aa).

It belongs to the universal ribosomal protein uS11 family. In terms of assembly, part of the 30S ribosomal subunit.

Its function is as follows. Located on the platform of the 30S subunit. The polypeptide is Small ribosomal subunit protein uS11 (Halobacterium salinarum (strain ATCC 700922 / JCM 11081 / NRC-1) (Halobacterium halobium)).